The sequence spans 441 residues: ATP-dependent protease ATPase subunit HslU (441 aa).

Residues V18, 60–65, D253, E319, and R391 contribute to the ATP site; that span reads GVGKTE.

This sequence belongs to the ClpX chaperone family. HslU subfamily. As to quaternary structure, a double ring-shaped homohexamer of HslV is capped on each side by a ring-shaped HslU homohexamer. The assembly of the HslU/HslV complex is dependent on binding of ATP.

The protein localises to the cytoplasm. In terms of biological role, ATPase subunit of a proteasome-like degradation complex; this subunit has chaperone activity. The binding of ATP and its subsequent hydrolysis by HslU are essential for unfolding of protein substrates subsequently hydrolyzed by HslV. HslU recognizes the N-terminal part of its protein substrates and unfolds these before they are guided to HslV for hydrolysis. This chain is ATP-dependent protease ATPase subunit HslU, found in Nitratidesulfovibrio vulgaris (strain DP4) (Desulfovibrio vulgaris).